Consider the following 395-residue polypeptide: Flap endonuclease 1 (395 aa).

The tract at residues 1-104 (MGIKHLYQVI…GELAKRFMRK (104 aa)) is N-domain. Residue Asp34 coordinates Mg(2+). DNA-binding residues include Arg47 and Arg70. Asp86, Glu158, Glu160, Asp179, and Asp181 together coordinate Mg(2+). Residues 122–253 (DVEKFSRRTV…NTALKLIRDH (132 aa)) form an I-domain region. Position 158 (Glu158) interacts with DNA. DNA is bound by residues Gly231 and Asp233. Asp233 lines the Mg(2+) pocket. The interval 341–349 (QQSRLEGFF) is interaction with PCNA. Positions 357 to 389 (QEKATLKRKHEEKLELQKKKKKEEAKAKKEAKS) are enriched in basic and acidic residues. The segment at 357 to 395 (QEKATLKRKHEEKLELQKKKKKEEAKAKKEAKSKPRGAV) is disordered.

Belongs to the XPG/RAD2 endonuclease family. FEN1 subfamily. In terms of assembly, interacts with PCNA. Three molecules of FEN1 bind to one PCNA trimer with each molecule binding to one PCNA monomer. PCNA stimulates the nuclease activity without altering cleavage specificity. Mg(2+) serves as cofactor. Post-translationally, phosphorylated. Phosphorylation upon DNA damage induces relocalization to the nuclear plasma.

Its subcellular location is the nucleus. The protein localises to the nucleolus. It is found in the nucleoplasm. The protein resides in the mitochondrion. Structure-specific nuclease with 5'-flap endonuclease and 5'-3' exonuclease activities involved in DNA replication and repair. During DNA replication, cleaves the 5'-overhanging flap structure that is generated by displacement synthesis when DNA polymerase encounters the 5'-end of a downstream Okazaki fragment. It enters the flap from the 5'-end and then tracks to cleave the flap base, leaving a nick for ligation. Also involved in the long patch base excision repair (LP-BER) pathway, by cleaving within the apurinic/apyrimidinic (AP) site-terminated flap. Acts as a genome stabilization factor that prevents flaps from equilibrating into structures that lead to duplications and deletions. Also possesses 5'-3' exonuclease activity on nicked or gapped double-stranded DNA, and exhibits RNase H activity. Also involved in replication and repair of rDNA and in repairing mitochondrial DNA. In Ajellomyces dermatitidis (strain ER-3 / ATCC MYA-2586) (Blastomyces dermatitidis), this protein is Flap endonuclease 1.